The sequence spans 299 residues: MAEFPASLLILNGKSTDNLPLREAIMLLREEGMTIHVRVTWEKGDAARYVEEARKLGVATVIAGGGDGTINEVSTALIQCEGDDIPALGILPLGTANDFATSVGIPEALDKALKLAIAGNAIAIDMAQVNKQTCFINMATGGFGTRITTETPEKLKAALGGVSYIIHGLMRMDTLQPDRCEIRGENFHWQGDALVIGIGNGRQAGGGQQLCPNALINDGLLQLRIFTGDEILPALVSTLKSDEDNPNIIEGASSWFDIQAPHEITFNLDGEPLSGQNFHIEILPAALRCRLPPDCPLLR.

The DAGKc domain occupies 2–133 (AEFPASLLIL…IDMAQVNKQT (132 aa)). ATP-binding positions include T40, 66–72 (GDGTINE), and T95. 3 residues coordinate Mg(2+): L215, D218, and L220. Residue E271 is the Proton acceptor of the active site.

It belongs to the diacylglycerol/lipid kinase family. YegS lipid kinase subfamily. Mg(2+) is required as a cofactor. Requires Ca(2+) as cofactor.

It localises to the cytoplasm. Probably phosphorylates lipids; the in vivo substrate is unknown. The polypeptide is Probable lipid kinase YegS (Escherichia coli (strain 55989 / EAEC)).